Here is a 78-residue protein sequence, read N- to C-terminus: Large ribosomal subunit protein bL28 (78 aa).

This sequence belongs to the bacterial ribosomal protein bL28 family.

The sequence is that of Large ribosomal subunit protein bL28 from Microcystis aeruginosa (strain NIES-843 / IAM M-2473).